The following is a 229-amino-acid chain: MQEIRGVVFDLYGTLCDVHSVAQLCGQYFPERGTEISLMWRQKQLEYSWLRSLMGQYVSFPQATEDALVFVCNALNLKLREDTRIALCNEYLNIKPYREVRSALESLRSGAVPLAILSNGSAHSIQSVVGNAGIEHFFSHLISADEVSVSKPSPAAYELAEKRLKVVRSKLLFVSSNAWDASGARHFGFQVCWVNRSRNTFEQLGERPDHVISGLDELPNLLNFASADR.

The active-site Nucleophile is D10. An (S)-2-haloacid-binding positions include 11-12 (LY), R41, and 118-119 (SN). The tract at residues 175–180 (SSNAWD) is important for catalytic activity.

Belongs to the HAD-like hydrolase superfamily. S-2-haloalkanoic acid dehalogenase family.

The catalysed reaction is an (S)-2-haloacid + H2O = a (2R)-2-hydroxycarboxylate + a halide anion + H(+). It carries out the reaction (S)-2-chloropropanoate + H2O = (R)-lactate + chloride + H(+). Catalyzes the hydrolytic dehalogenation of small (S)-2-haloalkanoic acids to yield the corresponding (R)-2-hydroxyalkanoic acids. Acts on acids of short chain lengths, C(2) to C(4), with inversion of configuration at C-2. Active with 2-halogenated carboxylic acids and converts only the S-isomer (or L-isomer) of 2-chloropropionic acid with inversion of configuration to produce R-lactate (or D-isomer). This Pseudomonas sp. (strain CBS-3) protein is (S)-2-haloacid dehalogenase 2.